We begin with the raw amino-acid sequence, 387 residues long: 1-deoxy-D-xylulose 5-phosphate reductoisomerase (387 aa).

Positions 10, 11, 12, 13, 36, 37, and 124 each coordinate NADPH. 1-deoxy-D-xylulose 5-phosphate is bound at residue Lys-125. Residue Glu-126 participates in NADPH binding. Residue Asp-150 coordinates Mn(2+). Ser-151, Glu-152, Ser-176, and His-199 together coordinate 1-deoxy-D-xylulose 5-phosphate. Glu-152 is a binding site for Mn(2+). Gly-205 is an NADPH binding site. 1-deoxy-D-xylulose 5-phosphate-binding residues include Ser-212, Asn-217, Lys-218, and Glu-221. Glu-221 serves as a coordination point for Mn(2+).

The protein belongs to the DXR family. The cofactor is Mg(2+). Mn(2+) is required as a cofactor.

The enzyme catalyses 2-C-methyl-D-erythritol 4-phosphate + NADP(+) = 1-deoxy-D-xylulose 5-phosphate + NADPH + H(+). It functions in the pathway isoprenoid biosynthesis; isopentenyl diphosphate biosynthesis via DXP pathway; isopentenyl diphosphate from 1-deoxy-D-xylulose 5-phosphate: step 1/6. Functionally, catalyzes the NADPH-dependent rearrangement and reduction of 1-deoxy-D-xylulose-5-phosphate (DXP) to 2-C-methyl-D-erythritol 4-phosphate (MEP). This is 1-deoxy-D-xylulose 5-phosphate reductoisomerase from Cyanothece sp. (strain PCC 7425 / ATCC 29141).